We begin with the raw amino-acid sequence, 298 residues long: Osmoprotective compounds uptake permease protein GgtD (298 aa).

7 helical membrane-spanning segments follow: residues 26 to 46 (IHIA…GLFI), 97 to 117 (IAVP…YAFA), 126 to 146 (LLFI…LIPV), 158 to 178 (TFLG…IYLL), 207 to 227 (LIVP…FLWV), 231 to 251 (LLVA…TIQL), and 263 to 283 (YLLT…FFGL). Residues 91–283 (FLNSLTIAVP…IVPLMVFFGL (193 aa)) enclose the ABC transmembrane type-1 domain.

The protein belongs to the binding-protein-dependent transport system permease family. In terms of assembly, the complex is composed of two ATP-binding proteins (GgtA), two transmembrane proteins (GgtC and GgtD) and a solute-binding protein (GgtB).

The protein resides in the cell membrane. In terms of biological role, part of the ABC transporter complex GgtABCD involved in the uptake of the osmoprotective compounds glucosylglycerol (GG), sucrose and trehalose. Responsible for the translocation of the substrate across the membrane. This Synechocystis sp. (strain ATCC 27184 / PCC 6803 / Kazusa) protein is Osmoprotective compounds uptake permease protein GgtD.